The chain runs to 379 residues: 2-methylcitrate synthase (379 aa).

His-187 is a substrate binding site. His-222 is a catalytic residue. 264–268 (KVMGF) serves as a coordination point for CoA. His-270 is a catalytic residue. Residue Arg-279 participates in substrate binding. Asp-321 is a catalytic residue. Substrate is bound by residues Arg-346 and Arg-365.

This sequence belongs to the citrate synthase family. In terms of assembly, homodimer.

It catalyses the reaction propanoyl-CoA + oxaloacetate + H2O = (2S,3S)-2-methylcitrate + CoA + H(+). The enzyme catalyses oxaloacetate + acetyl-CoA + H2O = citrate + CoA + H(+). Its pathway is organic acid metabolism; propanoate degradation. It participates in carbohydrate metabolism; tricarboxylic acid cycle; isocitrate from oxaloacetate: step 1/2. Involved in the catabolism of short chain fatty acids (SCFA) via the tricarboxylic acid (TCA)(acetyl degradation route) and via the 2-methylcitrate cycle I (propionate degradation route). Catalyzes the Claisen condensation of propionyl-CoA and oxaloacetate (OAA) to yield 2-methylcitrate (2-MC) and CoA. Also catalyzes the condensation of oxaloacetate with acetyl-CoA but with a lower specificity. This is 2-methylcitrate synthase (gltA) from Antarctic bacterium DS2-3R.